The following is a 140-amino-acid chain: Lymphocyte antigen 6H (140 aa).

A signal peptide spans 1–25; sequence MLPAAMKGLGLALLAVLLCSAPAHG. A UPAR/Ly6 domain is found at 26-91; sequence LWCQDCTLTT…RHFFSDYLMG (66 aa). Disulfide bonds link Cys-28-Cys-52, Cys-31-Cys-40, Cys-45-Cys-73, Cys-77-Cys-104, and Cys-105-Cys-110. An N-linked (GlcNAc...) asparagine glycan is attached at Asn-36. Gly-115 carries the GPI-anchor amidated glycine lipid modification. Positions 116–140 are cleaved as a propeptide — removed in mature form; it reads AGHSPWALAGGLLLSLGPALLWAGP.

Interacts with CHRNA4 and CHRNA7. Highly expressed in brain (cerebral cortex, amygdala, hippocampus and subthalamic nucleus) and in acute human leukemic cell line MOLT-3. Also found in lower levels in testis, pancreas, small intestine and colon.

It localises to the cell membrane. In terms of biological role, believed to act as a modulator of nicotinic acetylcholine receptors (nAChRs) activity. In vitro inhibits alpha-3:beta-4-containing nAChRs maximum response. May play a role in the intracellular trafficking of alpha-7-containing nAChRs and may inhibit their expression at the cell surface. Seems to inhibit alpha-7/CHRNA7 signaling in hippocampal neurons. This Homo sapiens (Human) protein is Lymphocyte antigen 6H (LY6H).